Consider the following 346-residue polypeptide: Low specificity L-threonine aldolase (346 aa).

Residue Lys-207 is modified to N6-(pyridoxal phosphate)lysine.

The protein belongs to the threonine aldolase family. As to quaternary structure, homotetramer. It depends on pyridoxal 5'-phosphate as a cofactor.

The catalysed reaction is L-threonine = acetaldehyde + glycine. The enzyme catalyses L-allo-threonine = acetaldehyde + glycine. Catalyzes the cleavage of L-allo-threonine and L-threonine to glycine and acetaldehyde. Can also act on L-erythro-phenylserine, L-threo-phenylserine, L-beta-3,4-methylenedioxyphenylserine and L-beta-3,4-dihydroxyphenylserine. This Pseudomonas sp. (strain NCIMB 10558) protein is Low specificity L-threonine aldolase (ltaE).